The sequence spans 153 residues: Transcriptional repressor NrdR (153 aa).

Residues C3 to C34 fold into a zinc finger. The 91-residue stretch at L49–V139 folds into the ATP-cone domain.

This sequence belongs to the NrdR family. The cofactor is Zn(2+).

Negatively regulates transcription of bacterial ribonucleotide reductase nrd genes and operons by binding to NrdR-boxes. The protein is Transcriptional repressor NrdR of Bacillus cytotoxicus (strain DSM 22905 / CIP 110041 / 391-98 / NVH 391-98).